The sequence spans 156 residues: Small ribosomal subunit protein uS7 (156 aa).

This sequence belongs to the universal ribosomal protein uS7 family. As to quaternary structure, part of the 30S ribosomal subunit. Contacts proteins S9 and S11.

Its function is as follows. One of the primary rRNA binding proteins, it binds directly to 16S rRNA where it nucleates assembly of the head domain of the 30S subunit. Is located at the subunit interface close to the decoding center, probably blocks exit of the E-site tRNA. This is Small ribosomal subunit protein uS7 from Dichelobacter nodosus (strain VCS1703A).